Consider the following 37-residue polypeptide: Cytochrome b6-f complex subunit 5 (37 aa).

Residues 5-25 form a helical membrane-spanning segment; it reads LLFGIVLGLIPITLAGLFVTA.

Belongs to the PetG family. The 4 large subunits of the cytochrome b6-f complex are cytochrome b6, subunit IV (17 kDa polypeptide, PetD), cytochrome f and the Rieske protein, while the 4 small subunits are PetG, PetL, PetM and PetN. The complex functions as a dimer.

It is found in the plastid. Its subcellular location is the chloroplast thylakoid membrane. Component of the cytochrome b6-f complex, which mediates electron transfer between photosystem II (PSII) and photosystem I (PSI), cyclic electron flow around PSI, and state transitions. PetG is required for either the stability or assembly of the cytochrome b6-f complex. This chain is Cytochrome b6-f complex subunit 5, found in Lemna minor (Common duckweed).